The following is a 382-amino-acid chain: ATP phosphoribosyltransferase regulatory subunit (382 aa).

The protein belongs to the class-II aminoacyl-tRNA synthetase family. HisZ subfamily. Heteromultimer composed of HisG and HisZ subunits.

Its subcellular location is the cytoplasm. The protein operates within amino-acid biosynthesis; L-histidine biosynthesis; L-histidine from 5-phospho-alpha-D-ribose 1-diphosphate: step 1/9. In terms of biological role, required for the first step of histidine biosynthesis. May allow the feedback regulation of ATP phosphoribosyltransferase activity by histidine. The sequence is that of ATP phosphoribosyltransferase regulatory subunit from Burkholderia ambifaria (strain MC40-6).